Consider the following 359-residue polypeptide: Mitochondrial glutathione transporter SLC25A39 (359 aa).

Topologically, residues 1 to 14 (MADQDPGGISPLQQ) are mitochondrial intermembrane. Solcar repeat units follow at residues 9–151 (ISPL…LKAF), 159–243 (SDLY…VKSW), and 253–347 (TSVG…GKNF). Residues 15–35 (MVASGAGAVVTSLFMTPLDVV) traverse the membrane as a helical segment. Over 36–121 (KVRLQSQRPS…VKIVRHEGTR (86 aa)) the chain is Mitochondrial matrix. [2Fe-2S] cluster contacts are provided by cysteine 74, cysteine 78, cysteine 88, and cysteine 94. Residues 122 to 142 (TLWSGLPATLVMTVPATAAYF) form a helical membrane-spanning segment. Over 143-164 (TAYDQLKAFLCGRALTSDLYAP) the chain is Mitochondrial intermembrane. The chain crosses the membrane as a helical span at residues 165–185 (MVAGALARLGTVTVISPLELV). Over 186-214 (RTKLQAQHLSYRELGTCVRAAVAQGGWRS) the chain is Mitochondrial matrix. A helical transmembrane segment spans residues 215–235 (LWLGWGPTALRDVPFSALYWF). The Mitochondrial intermembrane portion of the chain corresponds to 236–255 (NYELVKSWLSGLRPKDQTSV). The chain crosses the membrane as a helical span at residues 256-276 (GISFVAGGISGMVAATLTLPF). Topologically, residues 277–317 (DVVKTQRQVALGAVEALRVMPLNTDSTWLLLRRILAESGTR) are mitochondrial matrix. A helical membrane pass occupies residues 318–338 (GLFAGFLPRIIKAAPSCAIMI). Residues 339-359 (STYEFGKNFFQRLNREQLLSP) lie on the Mitochondrial intermembrane side of the membrane.

It belongs to the mitochondrial carrier (TC 2.A.29) family. Cleaved and degraded by AFG3L2; degradation by AFG3L2 is regulated by the ability of SLC25A39 to bind iron-sulfur. In absence of mitochondrial glutathione, SLC25A39 binds iron-sulfur, preventing cleavage and degradation by AFG3L2. The presence of mitochondrial glutathione prevents iron-sulfur-binding to SLC25A39, promoting cleavage and degradation by AFG3L2.

The protein localises to the mitochondrion inner membrane. The catalysed reaction is glutathione(in) = glutathione(out). With respect to regulation, the activity of SLC25A39 is regulated by levels of mitochondrial glutathione via its ability to bind [2Fe-2S] iron-sulfur cluster. Upon physiological levels of mitochondrial glutathione, glutathione prevents iron-sulfur-binding to SLC25A39 promoting cleavage and degradation by AFG3L2. Upon depletion of mitochondrial glutathione, SLC25A39 binds iron-sulfur, preventing cleavage and degradation by AFG3L2. Functionally, mitochondrial transporter required for glutathione import into mitochondria. Glutathione, which plays key roles in oxidative metabolism, is produced exclusively in the cytosol and is imported in many organelles. Mitochondrial glutathione is required for the activity and stability of proteins containing iron-sulfur clusters, as well as erythropoiesis. This Bos taurus (Bovine) protein is Mitochondrial glutathione transporter SLC25A39 (SLC25A39).